The primary structure comprises 260 residues: Transforming acid coiled-coil-containing protein 1 (260 aa).

Positions 1–43 are disordered; the sequence is MSLNTTFTKEDGTEVVIPFNGSQNGHPENEEPEVEEAAEPSSS. A coiled-coil region spans residues 108–249; that stretch reads ASSEELEKAL…CDQLLNDVDV (142 aa).

Belongs to the TACC family. In terms of assembly, interacts with zyg-9 to form a heterodimer. Interacts with zyg-8 to form a heterodimer. Interacts with efa-6 (via N-terminus). Expressed in touch neurons.

The protein resides in the cytoplasm. It localises to the cytoskeleton. The protein localises to the spindle pole. Its subcellular location is the microtubule organizing center. It is found in the centrosome. The protein resides in the chromosome. It localises to the centromere. The protein localises to the kinetochore. Its subcellular location is the cell projection. It is found in the axon. The protein resides in the perikaryon. Functionally, involved in microtubule formation, polymerization and assembly, regulating microtubule nucleation and length. Plays a role in pronuclear migration and mitotic and meiotic spindle elongation during early embryogenesis. In complex with zyg-9, functions during the early stages of embryonic development to regulate microtubule assembly throughout the cell cycle. Specifically, the complex is required for the formation and growth of astral microtubules and spindle microtubules during mitotic spindle assembly. At anaphase, the complex is required for mitotic spindle positioning in one-cell stage embryos. The complex acts in a partially redundant manner with the tac-1/zyg-8 complex to regulate microtubule assembly and processes during interphase, mitosis and meiosis in embryos. Plays a role in injury-induced axonal regrowth, regeneration and microtubule stability in PLM neurons and this may be downstream of efa-6. The protein is Transforming acid coiled-coil-containing protein 1 of Caenorhabditis elegans.